A 518-amino-acid polypeptide reads, in one-letter code: Protein nucleotidyltransferase YdiU (518 aa).

The ATP site is built by Gly-100, Gly-102, Arg-103, Lys-123, Asp-135, Gly-136, Arg-193, and Arg-200. The active-site Proton acceptor is Asp-270. 2 residues coordinate Mg(2+): Asn-271 and Asp-280. ATP is bound at residue Asp-280.

The protein belongs to the SELO family. The cofactor is Mg(2+). Mn(2+) is required as a cofactor.

It catalyses the reaction L-seryl-[protein] + ATP = 3-O-(5'-adenylyl)-L-seryl-[protein] + diphosphate. The catalysed reaction is L-threonyl-[protein] + ATP = 3-O-(5'-adenylyl)-L-threonyl-[protein] + diphosphate. It carries out the reaction L-tyrosyl-[protein] + ATP = O-(5'-adenylyl)-L-tyrosyl-[protein] + diphosphate. The enzyme catalyses L-histidyl-[protein] + UTP = N(tele)-(5'-uridylyl)-L-histidyl-[protein] + diphosphate. It catalyses the reaction L-seryl-[protein] + UTP = O-(5'-uridylyl)-L-seryl-[protein] + diphosphate. The catalysed reaction is L-tyrosyl-[protein] + UTP = O-(5'-uridylyl)-L-tyrosyl-[protein] + diphosphate. Its function is as follows. Nucleotidyltransferase involved in the post-translational modification of proteins. It can catalyze the addition of adenosine monophosphate (AMP) or uridine monophosphate (UMP) to a protein, resulting in modifications known as AMPylation and UMPylation. This chain is Protein nucleotidyltransferase YdiU, found in Xanthomonas oryzae pv. oryzae (strain PXO99A).